The sequence spans 576 residues: Proline--tRNA ligase (576 aa).

This sequence belongs to the class-II aminoacyl-tRNA synthetase family. ProS type 1 subfamily. As to quaternary structure, homodimer.

The protein localises to the cytoplasm. It carries out the reaction tRNA(Pro) + L-proline + ATP = L-prolyl-tRNA(Pro) + AMP + diphosphate. Catalyzes the attachment of proline to tRNA(Pro) in a two-step reaction: proline is first activated by ATP to form Pro-AMP and then transferred to the acceptor end of tRNA(Pro). As ProRS can inadvertently accommodate and process non-cognate amino acids such as alanine and cysteine, to avoid such errors it has two additional distinct editing activities against alanine. One activity is designated as 'pretransfer' editing and involves the tRNA(Pro)-independent hydrolysis of activated Ala-AMP. The other activity is designated 'posttransfer' editing and involves deacylation of mischarged Ala-tRNA(Pro). The misacylated Cys-tRNA(Pro) is not edited by ProRS. The protein is Proline--tRNA ligase of Thiobacillus denitrificans (strain ATCC 25259 / T1).